The following is a 221-amino-acid chain: Thymine/uracil-DNA glycosylase (221 aa).

Residues 105-133 enclose the HhH domain; that stretch reads DYGGRVPRNRKAILDLPGVGKYTCAAVMC. [4Fe-4S] cluster contacts are provided by C197, C204, C207, and C213.

The protein belongs to the Nth/MutY family. [4Fe-4S] cluster is required as a cofactor.

It carries out the reaction Hydrolyzes mismatched double-stranded DNA and polynucleotides, releasing free thymine.. In terms of biological role, DNA glycosylase that excises thymine from T/G mismatches and uracil from U/G mismatches. Acts as a repair enzyme able to counteract the mutagenic effect of spontaneous hydrolytic deamination of DNA 5-methylcytosine (5-meC) residues that leads to the formation of T/G mismatches. May also repair U/G mismatches arising from hydrolytic deamination of DNA cytosine residues. G/G, A/G, T/C and U/C are minor substrates. This chain is Thymine/uracil-DNA glycosylase, found in Methanothermobacter thermautotrophicus (Methanobacterium thermoformicicum).